Reading from the N-terminus, the 423-residue chain is Hypoxia responsive morphology factor B (423 aa).

A Bipartite nuclear localization signal motif is present at residues 46-69 (KRSKTRRPKKEYKLQYENTKAHRV). The RNA recognition motif (RRM)-like domain stretch occupies residues 157–187 (TQNCWAYRAAYLNAVHTIFSEQICSAMEVSP). Residues 243–257 (LSPQSGRGPEPSTQI) are compositionally biased toward polar residues. Residues 243–273 (LSPQSGRGPEPSTQIAEPGRHDSQSEQSTIS) are disordered.

It belongs to the hrmA family.

The protein resides in the nucleus. Probably modulates the generation of the hypoxia-typic morphotype (called H-MORPH) with altered biofilm architecture that leads to increased host inflammation, rapid disease progression, and mortality in a murine model of invasive aspergillosis. The protein is Hypoxia responsive morphology factor B of Aspergillus fumigatus (strain CBS 144.89 / FGSC A1163 / CEA10) (Neosartorya fumigata).